The primary structure comprises 287 residues: Acetylglutamate kinase (287 aa).

Residues 64 to 65, R86, and N181 each bind substrate; that span reads GG.

It belongs to the acetylglutamate kinase family. ArgB subfamily.

The protein localises to the cytoplasm. It catalyses the reaction N-acetyl-L-glutamate + ATP = N-acetyl-L-glutamyl 5-phosphate + ADP. Its pathway is amino-acid biosynthesis; L-arginine biosynthesis; N(2)-acetyl-L-ornithine from L-glutamate: step 2/4. In terms of biological role, catalyzes the ATP-dependent phosphorylation of N-acetyl-L-glutamate. This Desulforamulus reducens (strain ATCC BAA-1160 / DSM 100696 / MI-1) (Desulfotomaculum reducens) protein is Acetylglutamate kinase.